A 120-amino-acid polypeptide reads, in one-letter code: NAD(P)H-quinone oxidoreductase subunit 3, chloroplastic (120 aa).

A run of 3 helical transmembrane segments spans residues 9 to 29 (IFWA…LISG), 64 to 84 (MFAL…PWAM), and 88 to 108 (VLGV…IIGS).

Belongs to the complex I subunit 3 family. NDH is composed of at least 16 different subunits, 5 of which are encoded in the nucleus.

The protein localises to the plastid. The protein resides in the chloroplast thylakoid membrane. The catalysed reaction is a plastoquinone + NADH + (n+1) H(+)(in) = a plastoquinol + NAD(+) + n H(+)(out). The enzyme catalyses a plastoquinone + NADPH + (n+1) H(+)(in) = a plastoquinol + NADP(+) + n H(+)(out). In terms of biological role, NDH shuttles electrons from NAD(P)H:plastoquinone, via FMN and iron-sulfur (Fe-S) centers, to quinones in the photosynthetic chain and possibly in a chloroplast respiratory chain. The immediate electron acceptor for the enzyme in this species is believed to be plastoquinone. Couples the redox reaction to proton translocation, and thus conserves the redox energy in a proton gradient. The protein is NAD(P)H-quinone oxidoreductase subunit 3, chloroplastic of Drimys granadensis.